The primary structure comprises 279 residues: NADPH-dependent 7-cyano-7-deazaguanine reductase (279 aa).

A substrate-binding site is contributed by 86–88 (IES). 88–89 (SK) serves as a coordination point for NADPH. C187 serves as the catalytic Thioimide intermediate. D194 functions as the Proton donor in the catalytic mechanism. A substrate-binding site is contributed by 226–227 (HE). 255-256 (RG) contributes to the NADPH binding site.

This sequence belongs to the GTP cyclohydrolase I family. QueF type 2 subfamily. In terms of assembly, homodimer.

The protein resides in the cytoplasm. The enzyme catalyses 7-aminomethyl-7-carbaguanine + 2 NADP(+) = 7-cyano-7-deazaguanine + 2 NADPH + 3 H(+). The protein operates within tRNA modification; tRNA-queuosine biosynthesis. Functionally, catalyzes the NADPH-dependent reduction of 7-cyano-7-deazaguanine (preQ0) to 7-aminomethyl-7-deazaguanine (preQ1). The chain is NADPH-dependent 7-cyano-7-deazaguanine reductase from Haemophilus influenzae (strain PittGG).